Reading from the N-terminus, the 164-residue chain is Probable Brix domain-containing ribosomal biogenesis protein (164 aa).

Positions 1–164 constitute a Brix domain; that stretch reads MIITTSRKPS…IKTVKILDIE (164 aa).

Functionally, probably involved in the biogenesis of the ribosome. The sequence is that of Probable Brix domain-containing ribosomal biogenesis protein from Methanococcus maripaludis (strain DSM 14266 / JCM 13030 / NBRC 101832 / S2 / LL).